The primary structure comprises 202 residues: Matrix protein (202 aa).

The disordered stretch occupies residues 9–31; that stretch reads KNRRDEDTQKSSPASAPLDDDDL. The PPXY motif motif lies at 35-38; it reads PPEY. Positions 115 to 151 are essential for glycoprotein binding; sequence KLRRTFIFQWADSRGPLEGEELEYSQEITWDDDTEFV.

The protein belongs to the lyssavirus matrix protein family. As to quaternary structure, homomultimer. Interacts with nucleoprotein and with the cytoplasmic domain of glycoprotein. Interacts with host ATP6V1A; this interaction plays an important role in virion uncoating after viral entry.

It is found in the virion membrane. The protein localises to the host endomembrane system. Its subcellular location is the host cytoplasm. Its function is as follows. Plays a major role in assembly, budding and uncoating of virion after membrane fusion. Completely covers the ribonucleoprotein coil and keep it in condensed bullet-shaped form. Inhibits viral transcription and stimulates replication. Plays a major role in early induction of TRAIL-mediated apoptosis in infected neurons. Inhibits the integrated stress response (ISR) in the infected cell by blocking the formation of stress granules. The protein is Matrix protein (M) of Rabies virus (strain SAD B19) (RABV).